A 152-amino-acid polypeptide reads, in one-letter code: Xanthine-guanine phosphoribosyltransferase (152 aa).

Residues 37–38 (RG), Arg69, and 88–96 (DDLVDTGGT) contribute to the 5-phospho-alpha-D-ribose 1-diphosphate site. Arg69 provides a ligand contact to GMP. Mg(2+) is bound at residue Asp89. The guanine site is built by Asp92 and Ile135. Xanthine-binding residues include Asp92 and Ile135. Residues 92–96 (DTGGT) and 134–135 (WI) each bind GMP.

It belongs to the purine/pyrimidine phosphoribosyltransferase family. XGPT subfamily. Homotetramer. It depends on Mg(2+) as a cofactor.

It is found in the cell inner membrane. It carries out the reaction GMP + diphosphate = guanine + 5-phospho-alpha-D-ribose 1-diphosphate. The enzyme catalyses XMP + diphosphate = xanthine + 5-phospho-alpha-D-ribose 1-diphosphate. It catalyses the reaction IMP + diphosphate = hypoxanthine + 5-phospho-alpha-D-ribose 1-diphosphate. The protein operates within purine metabolism; GMP biosynthesis via salvage pathway; GMP from guanine: step 1/1. It participates in purine metabolism; XMP biosynthesis via salvage pathway; XMP from xanthine: step 1/1. In terms of biological role, purine salvage pathway enzyme that catalyzes the transfer of the ribosyl-5-phosphate group from 5-phospho-alpha-D-ribose 1-diphosphate (PRPP) to the N9 position of the 6-oxopurines guanine and xanthine to form the corresponding ribonucleotides GMP (guanosine 5'-monophosphate) and XMP (xanthosine 5'-monophosphate), with the release of PPi. To a lesser extent, also acts on hypoxanthine. This is Xanthine-guanine phosphoribosyltransferase from Serratia proteamaculans (strain 568).